A 72-amino-acid polypeptide reads, in one-letter code: Prokaryotic ubiquitin-like protein Pup (72 aa).

The span at 1–10 (MATKDTGGGQ) shows a compositional bias: gly residues. Positions 1–45 (MATKDTGGGQQKATRSTEEVEEQAQDAQASEDLKERQEKLSDDVD) are disordered. A coiled-coil region spans residues 10 to 60 (QQKATRSTEEVEEQAQDAQASEDLKERQEKLSDDVDSVLDEIDDVLEENAE). An ARC ATPase binding region spans residues 28–66 (QASEDLKERQEKLSDDVDSVLDEIDDVLEENAEDFVRSF). Residues 31 to 42 (EDLKERQEKLSD) show a composition bias toward basic and acidic residues. Glu72 participates in a covalent cross-link: Isoglutamyl lysine isopeptide (Glu-Lys) (interchain with K-? in acceptor proteins).

It belongs to the prokaryotic ubiquitin-like protein family. In terms of assembly, strongly interacts with the proteasome-associated ATPase ARC through a hydrophobic interface; the interacting region of Pup lies in its C-terminal half. There is one Pup binding site per ARC hexamer ring.

It participates in protein degradation; proteasomal Pup-dependent pathway. Functionally, protein modifier that is covalently attached to lysine residues of substrate proteins, thereby targeting them for proteasomal degradation. The tagging system is termed pupylation. The chain is Prokaryotic ubiquitin-like protein Pup from Streptomyces coelicolor (strain ATCC BAA-471 / A3(2) / M145).